The following is a 145-amino-acid chain: Deoxyuridine 5'-triphosphate nucleotidohydrolase (145 aa).

Substrate is bound by residues 65-67 (RSG), Asn-78, 82-84 (TID), and Lys-92.

Belongs to the dUTPase family. It depends on Mg(2+) as a cofactor.

The enzyme catalyses dUTP + H2O = dUMP + diphosphate + H(+). Its pathway is pyrimidine metabolism; dUMP biosynthesis; dUMP from dCTP (dUTP route): step 2/2. In terms of biological role, this enzyme is involved in nucleotide metabolism: it produces dUMP, the immediate precursor of thymidine nucleotides and it decreases the intracellular concentration of dUTP so that uracil cannot be incorporated into DNA. The chain is Deoxyuridine 5'-triphosphate nucleotidohydrolase from Syntrophomonas wolfei subsp. wolfei (strain DSM 2245B / Goettingen).